Consider the following 347-residue polypeptide: Haptoglobin (347 aa).

An N-terminal signal peptide occupies residues 1–18 (MRALGAVVTLLLWGQLFA). The Sushi domain occupies 31–88 (DSCPKPPEIANGYVEHLVRYRCRQFYRLRAEGDGVYTLNDEKQWVNTVAGEKLPECEA). 4 disulfide bridges follow: C52–C86, C90–C207, C250–C281, and C292–C322. The Peptidase S1 domain occupies 103–345 (IIGGSMDAKG…LKDWVQETMA (243 aa)). N-linked (GlcNAc...) asparagine glycosylation is found at N148, N182, N256, and N264. The interval 259–264 (VPEKKN) is interaction with CD163.

It belongs to the peptidase S1 family. In terms of assembly, tetramer of two alpha and two beta chains; disulfide-linked. The hemoglobin/haptoglobin complex is composed of a haptoglobin dimer bound to two hemoglobin alpha-beta dimers. Interacts with CD163. Interacts with ERGIC3. In terms of tissue distribution, expressed by the liver and secreted in plasma.

It localises to the secreted. As a result of hemolysis, hemoglobin is found to accumulate in the kidney and is secreted in the urine. Haptoglobin captures, and combines with free plasma hemoglobin to allow hepatic recycling of heme iron and to prevent kidney damage. Haptoglobin also acts as an antioxidant, has antibacterial activity and plays a role in modulating many aspects of the acute phase response. Hemoglobin/haptoglobin complexes are rapidly cleared by the macrophage CD163 scavenger receptor expressed on the surface of liver Kupfer cells through an endocytic lysosomal degradation pathway. This Mus musculus (Mouse) protein is Haptoglobin (Hp).